We begin with the raw amino-acid sequence, 199 residues long: Probable molybdenum cofactor guanylyltransferase (199 aa).

GTP contacts are provided by residues 6–8 (LAG), lysine 18, aspartate 65, and aspartate 97. Aspartate 97 lines the Mg(2+) pocket.

The protein belongs to the MobA family. Mg(2+) serves as cofactor.

Its subcellular location is the cytoplasm. The enzyme catalyses Mo-molybdopterin + GTP + H(+) = Mo-molybdopterin guanine dinucleotide + diphosphate. Transfers a GMP moiety from GTP to Mo-molybdopterin (Mo-MPT) cofactor (Moco or molybdenum cofactor) to form Mo-molybdopterin guanine dinucleotide (Mo-MGD) cofactor. This chain is Probable molybdenum cofactor guanylyltransferase, found in Staphylococcus aureus (strain COL).